A 483-amino-acid polypeptide reads, in one-letter code: Dual specificity protein kinase CLK1 (483 aa).

A disordered region spans residues 1-49 (MRHSKRTYCPDWDERDWDYGTWRSSSSHKRKKRSHSSAREQKRCRYDHS). Positions 26-36 (SSHKRKKRSHS) are enriched in basic residues. The Nuclear localization signal signature appears at 29 to 33 (KRKKR). The segment covering 37-49 (SAREQKRCRYDHS) has biased composition (basic and acidic residues). Serine 61 is modified (phosphoserine). A compositionally biased stretch (low complexity) spans 84 to 111 (EPGHPYGEPGSRYQMHSSKSSGRSGRSS). Residues 84-146 (EPGHPYGEPG…SRSVEDDEEG (63 aa)) are disordered. Over residues 112–137 (YKSKHRSRHHTSQHHSHGKSHRRKRS) the composition is skewed to basic residues. Serine 139 is modified (phosphoserine). Positions 160–476 (YEIVDTLGEG…LKEALKHPFF (317 aa)) constitute a Protein kinase domain. ATP-binding positions include 166-174 (LGEGAFGKV) and lysine 190. Residue aspartate 287 is the Proton acceptor of the active site.

The protein belongs to the protein kinase superfamily. CMGC Ser/Thr protein kinase family. Lammer subfamily. As to quaternary structure, interacts with PPIG and UBL5. Autophosphorylates on all three types of residues.

The protein resides in the nucleus. It carries out the reaction L-seryl-[protein] + ATP = O-phospho-L-seryl-[protein] + ADP + H(+). The enzyme catalyses L-threonyl-[protein] + ATP = O-phospho-L-threonyl-[protein] + ADP + H(+). The catalysed reaction is L-tyrosyl-[protein] + ATP = O-phospho-L-tyrosyl-[protein] + ADP + H(+). With respect to regulation, regulates splicing of its own pre-mRNA according to its kinase activity; increased expression of the catalytically active form influences splicing to generate the catalytically inactive splicing variant lacking the kinase domain. Leucettine L41 inhibits its kinase activity and affects the regulation of alternative splicing mediated by phosphorylation of SR proteins. Its function is as follows. Dual specificity kinase acting on both serine/threonine and tyrosine-containing substrates. Phosphorylates serine- and arginine-rich (SR) proteins of the spliceosomal complex and may be a constituent of a network of regulatory mechanisms that enable SR proteins to control RNA splicing. Phosphorylates: SRSF1, SRSF3 and PTPN1. Regulates the alternative splicing of tissue factor (F3) pre-mRNA in endothelial cells. The polypeptide is Dual specificity protein kinase CLK1 (Mus musculus (Mouse)).